A 457-amino-acid chain; its full sequence is UDP-N-acetylmuramoylalanine--D-glutamate ligase (457 aa).

Residue 116–122 participates in ATP binding; sequence GTNGKTT.

It belongs to the MurCDEF family.

It localises to the cytoplasm. It catalyses the reaction UDP-N-acetyl-alpha-D-muramoyl-L-alanine + D-glutamate + ATP = UDP-N-acetyl-alpha-D-muramoyl-L-alanyl-D-glutamate + ADP + phosphate + H(+). It participates in cell wall biogenesis; peptidoglycan biosynthesis. Functionally, cell wall formation. Catalyzes the addition of glutamate to the nucleotide precursor UDP-N-acetylmuramoyl-L-alanine (UMA). This Caldicellulosiruptor bescii (strain ATCC BAA-1888 / DSM 6725 / KCTC 15123 / Z-1320) (Anaerocellum thermophilum) protein is UDP-N-acetylmuramoylalanine--D-glutamate ligase.